Here is a 263-residue protein sequence, read N- to C-terminus: MHIHSIKLPLVELKNINVVFEQKKALQNINLTLYPNSIITIVGPNGGGKSTLLKVLLKLLPPTSGQVIYHKNLRIGYVPQKIHLDHSLPITVERFLSLKKGISRQAIQDALSLLSISHLHKNSLQKLSGGEMQRVLLARAILNKPNLLVLDEPTQGVDINGQAELYQLIQQTQQQLNCAILMVSHDLNIVMADTNEVLCINQHICCAGTPETVSNDPTFIHFFGDQFAKNVALYTHKHNHKHDIHGDICCTSDFQSQQCTHKE.

The ABC transporter domain occupies V11–Q226. Residue G43–S50 coordinates ATP.

The protein belongs to the ABC transporter superfamily. Zinc importer (TC 3.A.1.15.5) family. The complex is composed of two ATP-binding proteins (ZnuC), two transmembrane proteins (ZnuB) and a solute-binding protein (ZnuA).

Its subcellular location is the cell inner membrane. The enzyme catalyses Zn(2+)(out) + ATP(in) + H2O(in) = Zn(2+)(in) + ADP(in) + phosphate(in) + H(+)(in). Functionally, part of the ABC transporter complex ZnuABC involved in zinc import. Responsible for energy coupling to the transport system. This is Zinc import ATP-binding protein ZnuC from Pasteurella multocida (strain Pm70).